A 318-amino-acid polypeptide reads, in one-letter code: NADH-ubiquinone oxidoreductase chain 1 (318 aa).

The next 9 membrane-spanning stretches (helical) occupy residues 2-22 (FLTNISCLIIPILLAVAFLTL), 36-56 (GPNIVGPYGLLQPIADAIKLF), 69-89 (LLFTIAPTLALSLALTLWIPL), 100-120 (LGMLFILAMSSLAVYSILWSG), 130-152 (IGALRAVAQTISYEVTLAIILLH), 171-191 (HIWLIIPSWPLTMMWFISTLA), 217-237 (AGPFALFFLAEYANIMMMNAL), 254-273 (LYSTNFMLKTTMLTISFLWI), and 294-314 (LPLTLALCMWHTSLLISLTSI).

Belongs to the complex I subunit 1 family.

Its subcellular location is the mitochondrion inner membrane. The enzyme catalyses a ubiquinone + NADH + 5 H(+)(in) = a ubiquinol + NAD(+) + 4 H(+)(out). Its function is as follows. Core subunit of the mitochondrial membrane respiratory chain NADH dehydrogenase (Complex I) that is believed to belong to the minimal assembly required for catalysis. Complex I functions in the transfer of electrons from NADH to the respiratory chain. The immediate electron acceptor for the enzyme is believed to be ubiquinone. The protein is NADH-ubiquinone oxidoreductase chain 1 (MT-ND1) of Cyclopes didactylus (Silky anteater).